Here is a 319-residue protein sequence, read N- to C-terminus: Biotin synthase (319 aa).

Residues 41–267 form the Radical SAM core domain; that stretch reads YKGNKVKVCS…TPDIMICGGR (227 aa). [4Fe-4S] cluster contacts are provided by C59, C63, and C66. C192 lines the [2Fe-2S] cluster pocket.

This sequence belongs to the radical SAM superfamily. Biotin synthase family. As to quaternary structure, homodimer. It depends on [4Fe-4S] cluster as a cofactor. [2Fe-2S] cluster serves as cofactor.

It carries out the reaction (4R,5S)-dethiobiotin + (sulfur carrier)-SH + 2 reduced [2Fe-2S]-[ferredoxin] + 2 S-adenosyl-L-methionine = (sulfur carrier)-H + biotin + 2 5'-deoxyadenosine + 2 L-methionine + 2 oxidized [2Fe-2S]-[ferredoxin]. The protein operates within cofactor biosynthesis; biotin biosynthesis; biotin from 7,8-diaminononanoate: step 2/2. Functionally, catalyzes the conversion of dethiobiotin (DTB) to biotin by the insertion of a sulfur atom into dethiobiotin via a radical-based mechanism. The protein is Biotin synthase of Endomicrobium trichonymphae.